A 1765-amino-acid polypeptide reads, in one-letter code: MAPQWMPQNIQKRLLKYILQQLSLFSEIDLPNLDVSLGTSSKVNLRNLELDIEKFSIPGMYMRSGSIETLSLSLTISDGVNVDCAGVNITLTPSLTPGKPNSTDQFSLAKSTADLANSVMFEDNVVEDEDIKETPSVDSNPLPPEIKDYRMSNMMAKAADMALSRLQLTVRDVKITMILETSHMEVCIEKVTLLSKEGTRYITVEGMTLNAIKPEVYSGEGVDNVDNSEERDETESEESEDYDDELMQTSFMADNKDDIHNSLMESMMFATQTSESVYMSATSNVFSSTTPRASTYENHQPSAVCVAYVSKCSVQFDGLQNIENMQVNLGRIKIAASPIPECLSSVIQSIRNLVRLSAMSTNETAGNTEKEPESDNTTLLNTLKIDEICVSFESALLKDGNFALDNTTCLSLSDIRFEQKNASFSFGSIAKIRLSRNDSKTELFCFDDSRAPNVADLGLEILNNDVSRITLICPKSLNIVVDEHLLTLAARYYSLMEPVIETLISVISTQTPYSYSNTHTSRFALHDTANNQKSNEFHAQTSSIHVKLQLNDFCITITISPITYDSQEGRFDTSSILFEYNDPTLGEQYASNQFLMISNLETSSAGVNKIRSFDSSSLQEIWLKTKIKTIVEKATLKLNFDVLIKIISSFGKLADLVRKSMVTSLPVARQKKVRMGSSLFLNATKMLKNCVEIKHCTIIFSHICPHFGDLKFSLKDIFVNFLQDGTLHSYVMSVLIQRICDSVHESLLEAADPRNKGYPMMFAKFKDNVGVHFKNCSFNYYGEWITLLESRERPREETNQSSSASSATSKKRQVNFTFADVSIGLVPVNLKSKIEVVIKKGIADLLIGTDGRSKLQSSFSSLTLLLIDDVANILSDKESKSLRHWINANNNHAIWTLNAILKSKGFVPVSYISSLFLNSTFESERHLEKRMTQAFSGQKIFASIDTKIHADALAVDLCADSCQCLIQTLKDLKQPVQFSFNEKYKPMTDEVDVFKDVDETTFSASVSVDVDNLEQTEIPENEKLEIVEDFFDKNLNSDSAEQSAIRSGSLSNSGTKSGAMSNIIFDDNHFGHSGEEFTTKVIPMAIGVSISNVTIKLYDGYDWKETQTTIKNAIRRVEDKAAKIGDNMNEVTEGSTSEHVRSVSNDSTELDTEAVNELLYESIHVGLLAGQDPQSFYDNINKSISNCGGSENVSEHNNLSPGSSSPASVNTANSTRSAASSHNIELGKVSSRRVRLKRSIYHKVLVELENLDLSNLTMVNSEPHPTKNSIVFSEDESKDDSELVSRMDLSVGSFKVVDNVPTSSWNMFVGYLREAGDKELGSSMLHAVIDTVRPVSSLAASELVISVSVLPLRLYVDQDTLDFLTRFGEFKDDRFTLPALDEEEVFIEKFQVNSVRIKLDYKPKKVDYAGIRSGHTNEFMNFFILDESEMVLKKLVLYGIPGFARLHKMLNDLWMPDIKRNQLGGVLSGLAPVKSIVKIGSGFKELVAVPLKEYEKDGRVIRGLQKGALSFAKITGGELLKFGVKLAAGTQTILESTEEALGGDGSAVRLPGYKKNTKSRRRTSPSEVIYATSRERSLFGHNTMSGAVFHRNSFDSYGEEEEFLEGAPALDGAGTQDAEQHQKSRFLVPAVFKSTAELPDVLESDSDLDDYYDESDNEGQKIVSLYSNQPENLNEGLQTAYTSLGRNLDTAREAIVSASTRAARSGSAQTAAREFAKATPIMVIRPIIGTTEAISRTLQGGINILDPEEKRRSEEKYKNTKKEAG.

3 disordered regions span residues 218–243 (SGEG…EDYD), 1188–1224 (GGSE…SHNI), and 1746–1765 (DPEE…KEAG). Over residues 226-243 (DNSEERDETESEESEDYD) the composition is skewed to acidic residues. Positions 1188 to 1206 (GGSENVSEHNNLSPGSSSP) are enriched in polar residues. Residues 1207 to 1221 (ASVNTANSTRSAASS) are compositionally biased toward low complexity. Positions 1747 to 1765 (PEEKRRSEEKYKNTKKEAG) are enriched in basic and acidic residues.

It belongs to the ATG2 family.

It is found in the preautophagosomal structure membrane. It localises to the endoplasmic reticulum membrane. It carries out the reaction a 1,2-diacyl-sn-glycero-3-phosphocholine(in) = a 1,2-diacyl-sn-glycero-3-phosphocholine(out). The enzyme catalyses a 1,2-diacyl-sn-glycero-3-phospho-L-serine(in) = a 1,2-diacyl-sn-glycero-3-phospho-L-serine(out). It catalyses the reaction a 1,2-diacyl-sn-glycero-3-phosphoethanolamine(in) = a 1,2-diacyl-sn-glycero-3-phosphoethanolamine(out). Its function is as follows. Lipid transfer protein required for autophagosome completion and peroxisome degradation and peroxisome degradation. Tethers the edge of the isolation membrane (IM) to the endoplasmic reticulum (ER) and mediates direct lipid transfer from ER to IM for IM expansion. ATG2 binds to the ER exit site (ERES), which is the membrane source for autophagosome formation, using basic residues in its N-terminal region (NR) and to the expanding edge of the IM through its C-terminal region. The latter binding is assisted by an ATG18-PtdIns3P interaction. ATG2 then extracts phospholipids from the membrane source using its NR and transfers them to ATG9 to the IM through its predicted beta-sheet-rich structure for membrane expansion. This is Autophagy-related protein 2 (ATG2) from Pichia angusta (Yeast).